The chain runs to 239 residues: Large ribosomal subunit protein uL2 (239 aa).

The disordered stretch occupies residues 202-239 (HGGGSHQHVGRPSTVARNTPPGRKVGHIAARRTGRRKG). Basic residues predominate over residues 225–239 (KVGHIAARRTGRRKG).

This sequence belongs to the universal ribosomal protein uL2 family. As to quaternary structure, part of the 50S ribosomal subunit. Forms a bridge to the 30S subunit in the 70S ribosome.

Its function is as follows. One of the primary rRNA binding proteins. Required for association of the 30S and 50S subunits to form the 70S ribosome, for tRNA binding and peptide bond formation. It has been suggested to have peptidyltransferase activity; this is somewhat controversial. Makes several contacts with the 16S rRNA in the 70S ribosome. The protein is Large ribosomal subunit protein uL2 of Desulfurococcus amylolyticus (strain DSM 18924 / JCM 16383 / VKM B-2413 / 1221n) (Desulfurococcus kamchatkensis).